The primary structure comprises 269 residues: Eukaryotic translation initiation factor 3 subunit G-1 (269 aa).

The RRM domain occupies 188 to 266 (AAIRISNLSE…LILSVEWSKP (79 aa)).

This sequence belongs to the eIF-3 subunit G family. In terms of assembly, component of the eukaryotic translation initiation factor 3 (eIF-3) complex. The eIF-3 complex interacts with pix.

It is found in the cytoplasm. Its function is as follows. RNA-binding component of the eukaryotic translation initiation factor 3 (eIF-3) complex, which is involved in protein synthesis of a specialized repertoire of mRNAs and, together with other initiation factors, stimulates binding of mRNA and methionyl-tRNAi to the 40S ribosome. The eIF-3 complex specifically targets and initiates translation of a subset of mRNAs involved in cell proliferation. This subunit can bind 18S rRNA. In Drosophila mojavensis (Fruit fly), this protein is Eukaryotic translation initiation factor 3 subunit G-1.